The primary structure comprises 432 residues: UDP-N-acetylglucosamine 1-carboxyvinyltransferase (432 aa).

Residue 22-23 (KN) coordinates phosphoenolpyruvate. Arginine 96 lines the UDP-N-acetyl-alpha-D-glucosamine pocket. Residue cysteine 120 is the Proton donor of the active site. A 2-(S-cysteinyl)pyruvic acid O-phosphothioketal modification is found at cysteine 120. Residues 125–129 (RPVDL), aspartate 310, and isoleucine 332 each bind UDP-N-acetyl-alpha-D-glucosamine.

It belongs to the EPSP synthase family. MurA subfamily.

The protein localises to the cytoplasm. The catalysed reaction is phosphoenolpyruvate + UDP-N-acetyl-alpha-D-glucosamine = UDP-N-acetyl-3-O-(1-carboxyvinyl)-alpha-D-glucosamine + phosphate. The protein operates within cell wall biogenesis; peptidoglycan biosynthesis. Functionally, cell wall formation. Adds enolpyruvyl to UDP-N-acetylglucosamine. The polypeptide is UDP-N-acetylglucosamine 1-carboxyvinyltransferase (Caulobacter sp. (strain K31)).